Consider the following 21-residue polypeptide: Glutathione S-transferase 1 (21 aa).

This sequence belongs to the GST superfamily. Phi family.

The enzyme catalyses RX + glutathione = an S-substituted glutathione + a halide anion + H(+). In terms of biological role, conjugation of reduced glutathione to a wide number of exogenous and endogenous hydrophobic electrophiles. In plants, may have a detoxification role against certain herbicides. The chain is Glutathione S-transferase 1 from Populus euphratica (Euphrates poplar).